Reading from the N-terminus, the 239-residue chain is Orotidine 5'-phosphate decarboxylase (239 aa).

Substrate contacts are provided by residues Asp-12, Lys-34, 61 to 70 (DLKFHDIPNT), Thr-125, Arg-188, Gln-197, Gly-217, and Arg-218. The active-site Proton donor is the Lys-63.

This sequence belongs to the OMP decarboxylase family. Type 1 subfamily. In terms of assembly, homodimer.

It carries out the reaction orotidine 5'-phosphate + H(+) = UMP + CO2. Its pathway is pyrimidine metabolism; UMP biosynthesis via de novo pathway; UMP from orotate: step 2/2. Catalyzes the decarboxylation of orotidine 5'-monophosphate (OMP) to uridine 5'-monophosphate (UMP). The sequence is that of Orotidine 5'-phosphate decarboxylase from Syntrophomonas wolfei subsp. wolfei (strain DSM 2245B / Goettingen).